Reading from the N-terminus, the 759-residue chain is TIR domain-containing adapter molecule 1 (759 aa).

The segment at Met1–Gly153 is TRIF-NTD. The TRAF6-binding signature appears at Glu84–Asp91. A pLxIS motif motif is present at residues Leu207–Ser210. Residue Ser210 is modified to Phosphoserine. A Glycyl lysine isopeptide (Lys-Gly) (interchain with G-Cter in ubiquitin) cross-link involves residue Lys229. The interval Glu241 to Ile296 is disordered. Short sequence motifs (TRAF6-binding) lie at residues Gln248–Trp255 and His299–Ala309. The disordered stretch occupies residues Leu340–Ser426. Over residues Val351–Pro365 the composition is skewed to low complexity. Over residues Phe366–His376 the composition is skewed to pro residues. Positions Lys430–Ser590 constitute a TIR domain. The interval Leu549 to Glu759 is sufficient to induce apoptosis. A disordered region spans residues Gly642–Leu723. A compositionally biased stretch (pro residues) spans His659–Pro705.

Homodimer. Found in a multi-helicase-TICAM1 complex at least composed of DHX36, DDX1, DDX21 and TICAM1; this complex exists in resting cells with or without poly(I:C) RNA ligand stimulation. Interacts (via TIR domain) with DDX21 (via C-terminus). Interacts (via TIR domain) with DHX36 (via C-terminus). Interacts with AZI2 and IRF7. Interacts with TICAM2 in TLR4 recruitment. Interaction with PIAS4 inhibits the TICAM1-induced NF-kappa-B, IRF and IFNB1 activation. Interacts with IKBKB and IKBKE. Interaction with SARM1 blocks TICAM1-dependent transcription factor activation. Interacts with TRAF3. Interacts (when phosphorylated) with IRF3; following activation and phosphorylation on the pLxIS motif by TBK1, recruits IRF3. Interacts with TBK1, TRAF6 and RIPK1 and these interactions are enhanced in the presence of WDFY1. Interacts with TRAFD1. Interacts with UBQLN1 (via UBA domain). Interacts with TLR4 in response to LPS in a WDFY1-dependent manner. Interacts with WDFY1 in response to poly(I:C). Interacts (via the TIR domain) with TLR3 in response to poly(I:C) and this interaction is enhanced in the presence of WDFY1. Interacts with TRIM56. Component of a multi-helicase-TICAM1 complex that acts as a cytoplasmic sensor of viral double-stranded RNA (dsRNA) and plays a role in the activation of a cascade of antiviral responses including the induction of pro-inflammatory cytokines. Interacts (via the TIR domain) with TLR5. Interacts with TRIM8. Interacts with TAX1BP1 and TRIM32; these interactions target TICAM1 to TAX1BP1-mediated selective autophagic degradation. Interacts with DDX50. Post-translationally, phosphorylated by TBK1. Following activation, phosphorylated by TBK1 at Ser-210 in the pLxIS motif. The phosphorylated pLxIS motif constitutes an IRF3-binding motif, leading to recruitment of the transcription factor IRF3 to induce type-I interferons and other cytokines. Polyubiquitinated at Lys-229 by TRIM38 with 'Lys-48'-linked chains, leading to proteasomal degradation. Polyubiquitinated with 'Lys-6' and 'Lys-33'-linked chains in a TRIM8-dependent manner.

Its subcellular location is the cytoplasmic vesicle. It is found in the autophagosome. The protein resides in the cytoplasm. It localises to the cytosol. The protein localises to the mitochondrion. Its function is as follows. Involved in innate immunity against invading pathogens. Adapter used by TLR3, TLR4 (through TICAM2) and TLR5 to mediate NF-kappa-B and interferon-regulatory factor (IRF) activation, and to induce apoptosis. Ligand binding to these receptors results in TRIF recruitment through its TIR domain. Distinct protein-interaction motifs allow recruitment of the effector proteins TBK1, TRAF6 and RIPK1, which in turn, lead to the activation of transcription factors IRF3 and IRF7, NF-kappa-B and FADD respectively. Phosphorylation by TBK1 on the pLxIS motif leads to recruitment and subsequent activation of the transcription factor IRF3 to induce expression of type I interferon and exert a potent immunity against invading pathogens. Component of a multi-helicase-TICAM1 complex that acts as a cytoplasmic sensor of viral double-stranded RNA (dsRNA) and plays a role in the activation of a cascade of antiviral responses including the induction of pro-inflammatory cytokines. In Bos taurus (Bovine), this protein is TIR domain-containing adapter molecule 1 (TICAM1).